The chain runs to 527 residues: Cytochrome P450 714B3 (527 aa).

Topologically, residues 1–14 (MEVAMAMAVKVLLS) are lumenal. Residues 15 to 35 (LCCVGACGLAVYLYHILWLVP) traverse the membrane as a helical; Signal-anchor for type III membrane protein segment. At 36 to 527 (QKVLAKFEDQ…SVCTKRGTAI (492 aa)) the chain is on the cytoplasmic side. Cys464 serves as a coordination point for heme.

It belongs to the cytochrome P450 family. The cofactor is heme.

It is found in the membrane. Its function is as follows. May be involved in gibberellin metabolism. This is Cytochrome P450 714B3 (CYP714B3) from Zea mays (Maize).